Reading from the N-terminus, the 253-residue chain is Major prion protein (253 aa).

An N-terminal signal peptide occupies residues 1 to 22; the sequence is MANLGCWMLVLFVATWSNLGLC. An interaction with ADGRG6 region spans residues 23–38; that stretch reads KKRPKPGGWNTGGSRY. Residues 23–230 are interaction with GRB2, ERI3 and SYN1; sequence KKRPKPGGWN…ESQAYYQRGS (208 aa). The segment at 25-108 is disordered; sequence RPKPGGWNTG…WNKPSKPKTN (84 aa). 5 tandem repeats follow at residues 51 to 59, 60 to 67, 68 to 75, 76 to 83, and 84 to 91. The segment at 51–91 is 5 X 8 AA tandem repeats of P-H-G-G-G-W-G-Q; sequence PQGGGGWGQPHGGGWGQPHGGGWGQPHGGGWGQPHGGGWGQ. Over residues 52–95 the composition is skewed to gly residues; sequence QGGGGWGQPHGGGWGQPHGGGWGQPHGGGWGQPHGGGWGQGGGT. Positions 61, 62, 63, 69, 70, 71, 77, 78, 79, 85, 86, and 87 each coordinate Cu(2+). Residues C179 and C214 are joined by a disulfide bond. N-linked (GlcNAc...) asparagine glycans are attached at residues N181 and N197. The GPI-anchor amidated serine moiety is linked to residue S230. The propeptide at 231–253 is removed in mature form; that stretch reads SMVLFSSPPVILLISFLIFLIVG.

Belongs to the prion family. In terms of assembly, monomer and homodimer. Has a tendency to aggregate into amyloid fibrils containing a cross-beta spine, formed by a steric zipper of superposed beta-strands. Soluble oligomers may represent an intermediate stage on the path to fibril formation. Copper binding may promote oligomerization. Interacts with GRB2, APP, ERI3/PRNPIP and SYN1. Mislocalized cytosolically exposed PrP interacts with MGRN1; this interaction alters MGRN1 subcellular location and causes lysosomal enlargement. Interacts with APP. Interacts with KIAA1191. Interacts with ADGRG6.

Its subcellular location is the cell membrane. The protein localises to the golgi apparatus. Its primary physiological function is unclear. May play a role in neuronal development and synaptic plasticity. May be required for neuronal myelin sheath maintenance. May promote myelin homeostasis through acting as an agonist for ADGRG6 receptor. May play a role in iron uptake and iron homeostasis. Soluble oligomers are toxic to cultured neuroblastoma cells and induce apoptosis (in vitro). Association with GPC1 (via its heparan sulfate chains) targets PRNP to lipid rafts. Also provides Cu(2+) or Zn(2+) for the ascorbate-mediated GPC1 deaminase degradation of its heparan sulfate side chains. The chain is Major prion protein (PRNP) from Pongo pygmaeus (Bornean orangutan).